Reading from the N-terminus, the 274-residue chain is MTLQEDIIRQLGVKAVIDPKQEIRQSVDFLKAYLLKHPFLKTYVLGISGGQDSSLAGKLAQMAIEELRAETGDEQYQFIAVRLPYGVQADEADAQKALAFIQPDQALTVNIKEAVDGQLRALETAGLEISDFNKGNIKARQRMISQYAIAGQTAGAVIGTDHAAENVTGFFTKFGDGGADILPLFRLTKRQGKALLKALKADPSLYEKVPTADLEDKKPGLADEVALGVSYQEIDDYLEGHTISAEAQARIEDWWHKGQHKRHLPITIFDDFWK.

Gly-46–Ser-53 is a binding site for ATP. Asp-52 serves as a coordination point for Mg(2+). Residue Arg-140 coordinates deamido-NAD(+). ATP is bound at residue Thr-160. Glu-165 is a Mg(2+) binding site. Residues Lys-173 and Asp-180 each contribute to the deamido-NAD(+) site. The ATP site is built by Lys-189 and Thr-211. Position 260–261 (His-260–Lys-261) interacts with deamido-NAD(+).

It belongs to the NAD synthetase family. As to quaternary structure, homodimer.

It catalyses the reaction deamido-NAD(+) + NH4(+) + ATP = AMP + diphosphate + NAD(+) + H(+). It participates in cofactor biosynthesis; NAD(+) biosynthesis; NAD(+) from deamido-NAD(+) (ammonia route): step 1/1. Its function is as follows. Catalyzes the ATP-dependent amidation of deamido-NAD to form NAD. Uses ammonia as a nitrogen source. The polypeptide is NH(3)-dependent NAD(+) synthetase (Streptococcus equi subsp. zooepidemicus (strain MGCS10565)).